Consider the following 440-residue polypeptide: 2-alpha-hydroxytaxane 2-O-benzoyltransferase (440 aa).

Active-site proton acceptor residues include H158 and D367.

It belongs to the plant acyltransferase family.

The catalysed reaction is 10-deacetyl-2-debenzoylbaccatin III + benzoyl-CoA = 10-deacetylbaccatin III + CoA. Its pathway is alkaloid biosynthesis; taxol biosynthesis; baccatin III from 10-deacetyl-2-debenzoylbaccatin III: step 1/2. Catalyzes the conversion of 2-debenzoyl-7,13-diacetylbaccatin III, a semisynthetic substrate, to 7,13-diacetylbaccatin III. The polypeptide is 2-alpha-hydroxytaxane 2-O-benzoyltransferase (Taxus cuspidata (Japanese yew)).